Reading from the N-terminus, the 336-residue chain is Uridine nucleosidase 1 (336 aa).

Catalysis depends on residues Asp-29 and His-260.

It belongs to the IUNH family. In terms of assembly, homodimer. Component of the NSH heterocomplex made of URH1/NSH1 and URH2/NSH2 which exhibits strong xanthosine nucleosidase activity. Interacts with URH2. In terms of tissue distribution, expressed ubiquitously in leaves, flowers, stems, pollen cells, root tip meristem and root vasculature.

Its subcellular location is the cytoplasm. It carries out the reaction uridine + H2O = D-ribose + uracil. The enzyme catalyses xanthosine + H2O = D-ribose + xanthine. The catalysed reaction is inosine + H2O = hypoxanthine + D-ribose. It catalyses the reaction adenosine + H2O = D-ribose + adenine. In terms of biological role, involved in purine and pyrimidine breakdown rather than in pyrimidine salvage, especially in response to dark stress. Together with URH2, required for efficient inosine and xanthosine hydrolytic activities. Unable to use cytidine as a substrate. Can use uridine, inosine, adenosine as well as the cytokinin derivative isopentenyladenine-riboside as substrates. Also hydrolyzes xanthosine with high efficiency. This chain is Uridine nucleosidase 1, found in Arabidopsis thaliana (Mouse-ear cress).